A 1438-amino-acid polypeptide reads, in one-letter code: DNA polymerase III PolC-type (1438 aa).

The Exonuclease domain maps to 422–578 (YVVFDVETTG…YDTEATAYIF (157 aa)).

It belongs to the DNA polymerase type-C family. PolC subfamily.

The protein localises to the cytoplasm. The enzyme catalyses DNA(n) + a 2'-deoxyribonucleoside 5'-triphosphate = DNA(n+1) + diphosphate. Required for replicative DNA synthesis. This DNA polymerase also exhibits 3' to 5' exonuclease activity. This Staphylococcus aureus (strain MSSA476) protein is DNA polymerase III PolC-type.